A 251-amino-acid polypeptide reads, in one-letter code: Triosephosphate isomerase (251 aa).

Substrate is bound at residue 9 to 11; sequence NWK. His-95 serves as the catalytic Electrophile. Residue Glu-167 is the Proton acceptor of the active site. Residues Gly-173, Ser-212, and 233 to 234 contribute to the substrate site; that span reads GG.

Belongs to the triosephosphate isomerase family. Homodimer.

It localises to the cytoplasm. It carries out the reaction D-glyceraldehyde 3-phosphate = dihydroxyacetone phosphate. It participates in carbohydrate biosynthesis; gluconeogenesis. It functions in the pathway carbohydrate degradation; glycolysis; D-glyceraldehyde 3-phosphate from glycerone phosphate: step 1/1. Involved in the gluconeogenesis. Catalyzes stereospecifically the conversion of dihydroxyacetone phosphate (DHAP) to D-glyceraldehyde-3-phosphate (G3P). This is Triosephosphate isomerase from Pseudomonas putida (strain ATCC 700007 / DSM 6899 / JCM 31910 / BCRC 17059 / LMG 24140 / F1).